A 609-amino-acid polypeptide reads, in one-letter code: MALPVLSEGAISAILGGDSSCKPTLQVINIRSINTGNGPPRYRLLMSDGLNTLSSFMLATQLNFLVDNNLLATNCICQVSRFIVNNLKDGRRVIIVMEMEVLKSADLVKGKIGNPHPYNDGQGPPQPAAPAPASAPPPSKPQNISAPPPPSMNRGASKLFGGGSVVNTPGGSQSKVVPIASLNPYQSKWTVRARVTNKGQIRTWSNSRGEGKLFSIEMVDESGEIRATAFNEQADKFFSLIEVNKVYYFSKGTLKIANKQYTSVKNDYEMTFNSETSVIPCDDSADVPMVQFEFVPIGELESKNKDTVLDIIGICKNAEEVTKVTIRSNNREVSKRNINLMDSSGKVVSTTLWGEDADKFDGSRQPVVAIKGARLSDFGGRSLSVLSSSTVMINPDIPEAFKLRAWFDSEGQVVEGTSISESRGGTGGGNTNWKSLLEVKTENLGHGEKADYFTSVATIVYLRKENCLYQACPSQDCNKKVIDQQNGLFRCEKCDKEFPNYKYRLILSANIADFGENQWITCFQESAESILGQNATYLGELKEKNEQAYDEVFQNANFRSYTFRIRVKLETYNDESRIKATAMDVKPVDHKEYSRRLIMNIRKMAAQGV.

The interval 112 to 164 (IGNPHPYNDGQGPPQPAAPAPASAPPPSKPQNISAPPPPSMNRGASKLFGGGS) is disordered. Residues 124 to 151 (PPQPAAPAPASAPPPSKPQNISAPPPPS) are compositionally biased toward pro residues. Residues 189–273 (WTVRARVTNK…VKNDYEMTFN (85 aa)) constitute a DNA-binding region (OB). The segment at 472–494 (CPSQDCNKKVIDQQNGLFRCEKC) adopts a C4-type zinc-finger fold.

Belongs to the replication factor A protein 1 family. In terms of assembly, component of the heterotrimeric canonical replication protein A complex (RPA). Interacts with rpain-a.

The protein localises to the nucleus. The protein resides in the PML body. In terms of biological role, as part of the heterotrimeric replication protein A complex (RPA/RP-A), binds and stabilizes single-stranded DNA intermediates, that form during DNA replication or upon DNA stress. It prevents their reannealing and in parallel, recruits and activates different proteins and complexes involved in DNA metabolism. Thereby, it plays an essential role both in DNA replication and the cellular response to DNA damage. This chain is Replication protein A 70 kDa DNA-binding subunit (rpa1), found in Xenopus tropicalis (Western clawed frog).